Here is a 298-residue protein sequence, read N- to C-terminus: 5,10-methylenetetrahydrofolate reductase (298 aa).

Residue E28 is the Proton donor/acceptor of the active site. Position 59 (T59) interacts with NADH. FAD contacts are provided by Y60, A62, H88, R118, G119, D120, A132, Y152, H156, A159, D165, N168, and K172. D120 is a binding site for (6S)-5-methyl-5,6,7,8-tetrahydrofolate. Q183 contacts NADH. Positions 183, 219, and 279 each coordinate (6S)-5-methyl-5,6,7,8-tetrahydrofolate.

It belongs to the methylenetetrahydrofolate reductase family. FAD serves as cofactor.

It carries out the reaction (6S)-5-methyl-5,6,7,8-tetrahydrofolate + NAD(+) = (6R)-5,10-methylene-5,6,7,8-tetrahydrofolate + NADH + H(+). Its pathway is one-carbon metabolism; tetrahydrofolate interconversion. It participates in amino-acid biosynthesis; L-methionine biosynthesis via de novo pathway. Functionally, catalyzes the NADH-dependent reduction of 5,10-methylenetetrahydrofolate to 5-methyltetrahydrofolate. Is required to provide the methyl group necessary for methionine synthetase to convert homocysteine to methionine; the methyl group is given by 5-methyltetrahydrofolate. The sequence is that of 5,10-methylenetetrahydrofolate reductase (metF) from Pectobacterium carotovorum subsp. carotovorum (Erwinia carotovora subsp. carotovora).